The primary structure comprises 492 residues: Probable cytosol aminopeptidase (492 aa).

The Mn(2+) site is built by Lys-248 and Asp-253. The active site involves Lys-260. Residues Asp-271, Asp-330, and Glu-332 each contribute to the Mn(2+) site. The active site involves Arg-334.

The protein belongs to the peptidase M17 family. Mn(2+) is required as a cofactor.

It is found in the cytoplasm. The enzyme catalyses Release of an N-terminal amino acid, Xaa-|-Yaa-, in which Xaa is preferably Leu, but may be other amino acids including Pro although not Arg or Lys, and Yaa may be Pro. Amino acid amides and methyl esters are also readily hydrolyzed, but rates on arylamides are exceedingly low.. The catalysed reaction is Release of an N-terminal amino acid, preferentially leucine, but not glutamic or aspartic acids.. Functionally, presumably involved in the processing and regular turnover of intracellular proteins. Catalyzes the removal of unsubstituted N-terminal amino acids from various peptides. In Aeropyrum pernix (strain ATCC 700893 / DSM 11879 / JCM 9820 / NBRC 100138 / K1), this protein is Probable cytosol aminopeptidase (pepA).